The chain runs to 129 residues: 3-aminoacrylate deaminase RutC (129 aa).

It belongs to the RutC family.

The catalysed reaction is (Z)-3-aminoacrylate + H2O + H(+) = 3-oxopropanoate + NH4(+). In terms of biological role, involved in pyrimidine catabolism. Catalyzes the deamination of 3-aminoacrylate to malonic semialdehyde, a reaction that can also occur spontaneously. RutC may facilitate the reaction and modulate the metabolic fitness, rather than catalyzing essential functions. The sequence is that of 3-aminoacrylate deaminase RutC from Caulobacter sp. (strain K31).